A 198-amino-acid chain; its full sequence is Recombination protein RecR (198 aa).

The C4-type zinc-finger motif lies at 57–72; it reads CSVCGHITENDPCYIC. The Toprim domain occupies 80–175; the sequence is SVICVVEDDK…KVTRLAQGLS (96 aa).

It belongs to the RecR family.

Functionally, may play a role in DNA repair. It seems to be involved in an RecBC-independent recombinational process of DNA repair. It may act with RecF and RecO. This chain is Recombination protein RecR, found in Staphylococcus aureus (strain MSSA476).